A 255-amino-acid polypeptide reads, in one-letter code: Phosphatidylglycerol--prolipoprotein diacylglyceryl transferase (255 aa).

The next 3 helical transmembrane spans lie at 15 to 35 (WYGIMIALGVLAALILANLNC), 46 to 66 (IDVFLISFPLAIIGARVYYVV), and 84 to 104 (LGGLAIHGGIIFGLGAAYIVS). Residue Arg-130 participates in a 1,2-diacyl-sn-glycero-3-phospho-(1'-sn-glycerol) binding. The next 3 membrane-spanning stretches (helical) occupy residues 169–189 (PTFLYESLWDLIVCIILVYIF), 196–216 (GTVICTYVGLYSLGRFFIEGL), and 228–248 (VAQLVSFIGIVLSISFFVYLK).

Belongs to the Lgt family.

Its subcellular location is the cell membrane. It catalyses the reaction L-cysteinyl-[prolipoprotein] + a 1,2-diacyl-sn-glycero-3-phospho-(1'-sn-glycerol) = an S-1,2-diacyl-sn-glyceryl-L-cysteinyl-[prolipoprotein] + sn-glycerol 1-phosphate + H(+). It functions in the pathway protein modification; lipoprotein biosynthesis (diacylglyceryl transfer). Functionally, catalyzes the transfer of the diacylglyceryl group from phosphatidylglycerol to the sulfhydryl group of the N-terminal cysteine of a prolipoprotein, the first step in the formation of mature lipoproteins. This Clostridium kluyveri (strain NBRC 12016) protein is Phosphatidylglycerol--prolipoprotein diacylglyceryl transferase.